A 1104-amino-acid polypeptide reads, in one-letter code: Translation initiation factor IF-2 (1104 aa).

Disordered regions lie at residues 51-444 (SLLG…LAAQ) and 461-497 (LARPAKPKSQQRTAPKPVAAMRKRKKETARQRQRRRA). Composition is skewed to low complexity over residues 60–119 (AKPA…KPQA) and 127–164 (ATPKPVISKPAPALVKAAAAPARPTAAKPVPRPAAAKP). The span at 189–202 (APTPRPTPARPTPR) shows a compositional bias: pro residues. 4 stretches are compositionally biased toward low complexity: residues 203 to 215 (PAGAGSPARPTPG), 227 to 246 (GAPSRPGAPTRAGAPAKPGA), 311 to 336 (STTGSGRPGAPTRPGAPGRPGMPAGM), and 366 to 396 (PTKAGAGAGTATPPVARPNSPSAPRRPSFRP). The segment covering 406–420 (GRPDWDDSARLDALR) has biased composition (basic and acidic residues). Over residues 481 to 495 (MRKRKKETARQRQRR) the composition is skewed to basic residues. In terms of domain architecture, tr-type G spans 596–768 (RRPPVVTVMG…LLLVTEVEDL (173 aa)). The interval 605–612 (GHVDHGKT) is G1. 605 to 612 (GHVDHGKT) lines the GTP pocket. Residues 630–634 (GITQH) are G2. Residues 655 to 658 (DTPG) are G3. Residues 655–659 (DTPGH) and 709–712 (NKID) contribute to the GTP site. The tract at residues 709–712 (NKID) is G4. A G5 region spans residues 745 to 747 (SAI).

It belongs to the TRAFAC class translation factor GTPase superfamily. Classic translation factor GTPase family. IF-2 subfamily.

The protein localises to the cytoplasm. Its function is as follows. One of the essential components for the initiation of protein synthesis. Protects formylmethionyl-tRNA from spontaneous hydrolysis and promotes its binding to the 30S ribosomal subunits. Also involved in the hydrolysis of GTP during the formation of the 70S ribosomal complex. The polypeptide is Translation initiation factor IF-2 (Synechococcus sp. (strain CC9605)).